The primary structure comprises 188 residues: Transcription factor FapR (188 aa).

Belongs to the FapR family.

Functionally, transcriptional factor involved in regulation of membrane lipid biosynthesis by repressing genes involved in fatty acid and phospholipid metabolism. This is Transcription factor FapR from Bacillus velezensis (strain DSM 23117 / BGSC 10A6 / LMG 26770 / FZB42) (Bacillus amyloliquefaciens subsp. plantarum).